Consider the following 384-residue polypeptide: MHAHASRPQARQTTLLRRAALFDFPASADLSPGTEAARHHTIQWLSRFGVFEGHESVAEYDALRFDVLAGLFYPRATGADLNLGSDLVGWYFVFDDQFDGELGSRPEAVARLVADVIRITEEDTAHGRAQDGEGPLLESFRDLWRRISSGRPQVWRDRFRHHWLEYLHSYHREALERTGALPGAGGDAPRSVEAVLALRRHSIGVQPCLDLNEPFGGYTLPPALHGGFPMARMREATDDVVVFTNDIASLDKELAVGDVHNSVIVQWERAGGELEDAVRHIADLANARYRWFEETAARLPALLTEAGADPGTHHAVGRYVDGMRHVMTGNLGWSVRTARYDERGTEAVSGGRQRPWAQLTGAEELIRAGRGAPLPPLGSGSGSR.

Residues Asp-95, Asn-245, Ser-249, and Glu-253 each contribute to the Mg(2+) site.

The protein belongs to the terpene synthase family. The cofactor is Mg(2+).

It catalyses the reaction (2E,6E)-farnesyl diphosphate + H2O = (+)-isoafricanol + diphosphate. Its function is as follows. Catalyzes the cyclization of farnesyl diphosphate (FPP) to isoafricanol. This Streptomyces violaceusniger (strain Tu 4113) protein is Isoafricanol synthase.